Reading from the N-terminus, the 474-residue chain is Cysteine--tRNA ligase (474 aa).

Cysteine 28 provides a ligand contact to Zn(2+). A 'HIGH' region motif is present at residues 30-40 (ITVYDLCHLGH). Cysteine 209, histidine 234, and glutamate 238 together coordinate Zn(2+). The 'KMSKS' region motif lies at 269–273 (KMSKS). Residue lysine 272 coordinates ATP.

The protein belongs to the class-I aminoacyl-tRNA synthetase family. As to quaternary structure, monomer. Requires Zn(2+) as cofactor.

It localises to the cytoplasm. The catalysed reaction is tRNA(Cys) + L-cysteine + ATP = L-cysteinyl-tRNA(Cys) + AMP + diphosphate. This is Cysteine--tRNA ligase from Blochmanniella floridana.